We begin with the raw amino-acid sequence, 80 residues long: RNA-binding protein Hfq (80 aa).

Residues 9 to 69 (DVFLNQVRKE…ISTILPITPI (61 aa)) enclose the Sm domain.

The protein belongs to the Hfq family. Homohexamer.

RNA chaperone that binds small regulatory RNA (sRNAs) and mRNAs to facilitate mRNA translational regulation in response to envelope stress, environmental stress and changes in metabolite concentrations. Also binds with high specificity to tRNAs. The protein is RNA-binding protein Hfq of Alkaliphilus metalliredigens (strain QYMF).